A 952-amino-acid polypeptide reads, in one-letter code: MSKTPPKFLFYLGNFTACMFGMTPAVYSLQTDSLEKFALERDEEFRTSFPLLDSLSTLTGFSPITTFVGNRHNSSQDIVLSNYKSIDNILLLWTSAGGAVSCNNFLLSNVEDHAFFSKNLAIGTGGAIACQGACTITKNRGPLIFFSNRGLNNASTGGETRGGAIACNGDFTISQNQGTFYFVNNSVNNWGGALSTNGHCRIQSNRAPLLFFNNTAPSGGGALRSENTTISDNTRPIYFKNNCGNNGGAIQTSVTVAIKNNSGSVIFNNNTALSGSINSGNGSGGAIYTTNLSIDDNPGTILFNNNYCIRDGGAICTQFLTIKNSGHVYFTNNQGNWGGALMLLQDSTCLLFAEQGNIAFQNNEVFLTTFGRYNAIHCTPNSNLQLGANKGYTTAFFDPIEHQHPTTNPLIFNPNANHQGTILFSSAYIPEASDYENNFISSSKNTSELRNGVLSIEDRAGWQFYKFTQKGGILKLGHAASIATTANSETPSTSVGSQVIINNLAINLPSILAKGKAPTLWIRPLQSSAPFTEDNNPTITLSGPLTLLNEENRDPYDSIDLSEPLQNIHLLSLSDVTARHINTDNFHPESLNATEHYGYQGIWSPYWVETITTTNNASIETANTLYRALYANWTPLGYKVNPEYQGDLATTPLWQSFHTMFSLLRSYNRTGDSDIERPFLEIQGIADGLFVHQNSIPGAPGFRIQSTGYSLQASSETSLHQKISLGFAQFFTRTKEIGSSNNVSAHNTVSSLYVELPWFQEAFATSTVLAYGYGDHHLHSLHPSHQEQAEGTCYSHTLAAAIGCSFPWQQKSYLHLSPFVQAIAIRSHQTAFEEIGDNPRKFVSQKPFYNLTLPLGIQGKWQSKFHVPTEWTLELSYQPVLYQQNPQIGVTLLASGGSWDILGHNYVRNALGYKVHNQTALFRSLDLFLDYQGSVSSSTSTHHLQAGSTLKF.

A signal peptide spans 1–27 (MSKTPPKFLFYLGNFTACMFGMTPAVY). The region spanning 646 to 952 (GDLATTPLWQ…HLQAGSTLKF (307 aa)) is the Autotransporter domain.

It belongs to the PMP outer membrane protein family.

Its subcellular location is the secreted. It is found in the cell wall. It localises to the cell outer membrane. This chain is Probable outer membrane protein pmp16 (pmp16), found in Chlamydia pneumoniae (Chlamydophila pneumoniae).